Here is a 320-residue protein sequence, read N- to C-terminus: tRNA U34 carboxymethyltransferase (320 aa).

Residues lysine 89, tryptophan 103, lysine 108, glycine 127, 177–178 (LE), methionine 193, tyrosine 197, and arginine 312 each bind carboxy-S-adenosyl-L-methionine.

The protein belongs to the class I-like SAM-binding methyltransferase superfamily. CmoB family. Homotetramer.

The enzyme catalyses carboxy-S-adenosyl-L-methionine + 5-hydroxyuridine(34) in tRNA = 5-carboxymethoxyuridine(34) in tRNA + S-adenosyl-L-homocysteine + H(+). Its function is as follows. Catalyzes carboxymethyl transfer from carboxy-S-adenosyl-L-methionine (Cx-SAM) to 5-hydroxyuridine (ho5U) to form 5-carboxymethoxyuridine (cmo5U) at position 34 in tRNAs. This is tRNA U34 carboxymethyltransferase from Stutzerimonas stutzeri (strain A1501) (Pseudomonas stutzeri).